The chain runs to 516 residues: Flavonoid-6-hydroxylase (516 aa).

Residues 3–23 form a helical membrane-spanning segment; the sequence is FNAAVCAALAFISLLSYYLIW. Position 455 (C455) interacts with heme.

It belongs to the cytochrome P450 family. It depends on heme as a cofactor.

It localises to the membrane. The catalysed reaction is genkwanin + reduced [NADPH--hemoprotein reductase] + O2 = scutellarein 7-methyl ether + oxidized [NADPH--hemoprotein reductase] + H2O. It catalyses the reaction (2S)-sakuranetin + reduced [NADPH--hemoprotein reductase] + O2 = (2S)-7-methylcarthamidin + oxidized [NADPH--hemoprotein reductase] + H2O + H(+). The enzyme catalyses apigenin 4',7-dimethyl ether + reduced [NADPH--hemoprotein reductase] + O2 = ladanein + oxidized [NADPH--hemoprotein reductase] + H2O + H(+). It carries out the reaction (2S)-naringenin 4',7-dimethyl ether + reduced [NADPH--hemoprotein reductase] + O2 = (2S)-carthamidin-4',7-dimethyl ether + oxidized [NADPH--hemoprotein reductase] + H2O + H(+). It functions in the pathway flavonoid metabolism. 6-OH hydroxylase involved in the biosynthesis of polymethoxylated flavonoids natural products such as pebrellin, aroma compounds which contribute to the flavor of peppermint, and exhibit pharmacological activities such as anti-allergic, anti-oxidant, antibacterial, anti-proliferative, and anti-inflammatory effects. Catalyzes the 6-hydroxylation of 7-O-methylated precursors such as the conversion of genkwanin (GENK) to scutellarein-7-methyl ether (SCU7Me). Can also use apigenin-7,4'-dimethyl ether (AdM), naringenin-7-methyl ether (SAK) and naringenin-7,4'-dimethyl ether (NdM) as substrates. This Mentha piperita (Peppermint) protein is Flavonoid-6-hydroxylase.